A 374-amino-acid polypeptide reads, in one-letter code: Alginate lyase (374 aa).

The N-terminal stretch at 1 to 23 is a signal peptide; that stretch reads MHKTRLALSCLLGSLLLSGAVHA. Substrate contacts are provided by residues 62-63, 135-136, and tyrosine 253; these read SK and HT.

It belongs to the polysaccharide lyase 5 family.

The protein resides in the periplasm. It catalyses the reaction Eliminative cleavage of alginate to give oligosaccharides with 4-deoxy-alpha-L-erythro-hex-4-enuronosyl groups at their non-reducing ends and beta-D-mannuronate at their reducing end.. Catalyzes the depolymerization of alginate by cleaving the beta-1,4 glycosidic bond between two adjacent sugar residues via a beta-elimination mechanism. May serve to degrade mislocalized alginate that is trapped in the periplasmic space. This Azotobacter vinelandii (strain DJ / ATCC BAA-1303) protein is Alginate lyase.